Here is a 127-residue protein sequence, read N- to C-terminus: Thioredoxin-3, mitochondrial (127 aa).

A mitochondrion-targeting transit peptide spans 1-21 (MLFYKPVMRMAVRPLKSIRFQ). Residues 22-127 (SSYTSITKLT…TALEKGIKDL (106 aa)) form the Thioredoxin domain. Residues cysteine 55 and cysteine 58 each act as nucleophile in the active site. Residues cysteine 55 and cysteine 58 are joined by a disulfide bond.

This sequence belongs to the thioredoxin family.

The protein localises to the mitochondrion. The sequence is that of Thioredoxin-3, mitochondrial (TRX3) from Saccharomyces cerevisiae (strain ATCC 204508 / S288c) (Baker's yeast).